Consider the following 126-residue polypeptide: Small ribosomal subunit protein uS12 (126 aa).

The segment at methionine 1 to aspartate 26 is disordered. Aspartate 89 bears the 3-methylthioaspartic acid mark. Positions aspartate 103–lysine 126 are disordered. The segment covering alanine 113–lysine 126 has biased composition (basic residues).

It belongs to the universal ribosomal protein uS12 family. As to quaternary structure, part of the 30S ribosomal subunit. Contacts proteins S8 and S17. May interact with IF1 in the 30S initiation complex.

Its function is as follows. With S4 and S5 plays an important role in translational accuracy. In terms of biological role, interacts with and stabilizes bases of the 16S rRNA that are involved in tRNA selection in the A site and with the mRNA backbone. Located at the interface of the 30S and 50S subunits, it traverses the body of the 30S subunit contacting proteins on the other side and probably holding the rRNA structure together. The combined cluster of proteins S8, S12 and S17 appears to hold together the shoulder and platform of the 30S subunit. This is Small ribosomal subunit protein uS12 from Paraburkholderia xenovorans (strain LB400).